Here is a 623-residue protein sequence, read N- to C-terminus: Immunity-related GTPase family Q protein (623 aa).

The cysteines at positions 152 and 158 are disulfide-linked. The stretch at 155-180 forms a coiled coil; sequence SDGCEELERLRAALQSQAEALRRLLP. The LIR 1 signature appears at 186–189; the sequence is FEVL. The residue at position 203 (T203) is a Phosphothreonine. An IRG-type G domain is found at 223 to 449; it reads ARLDLAVAGK…PGLCEWLRRA (227 aa). A disordered region spans residues 334–393; sequence EGEDPECLGEGKMENPKGESLKNAGGGGLENALSKGREKCSAGSQKAGSGEGPGKAGSEG. Over residues 342-353 the composition is skewed to basic and acidic residues; that stretch reads GEGKMENPKGES. Positions 421–424 match the LIR 2 motif; sequence WEVL.

It belongs to the TRAFAC class dynamin-like GTPase superfamily. IRG family. Interacts (via LIR motif 1) with GABARAPL2. Interacts (via LIR motif 2) with MAP1LC3B/LC3B.

It localises to the lysosome. Its subcellular location is the cytoplasmic vesicle. The protein resides in the autophagosome. Its function is as follows. Autophagy receptor that specifically promotes clearance of misfolded MHC class I molecules by targeting them to the lysosome for degradation. Acts as a molecular adapter that specifically recognizes and binds (1) misfolded MHC class I molecules following their ubiquitination, as well as (2) autophagy-related proteins, promoting the recruitment of misfolded MHC class I molecules to autophagy machinery for degradation. Degradation of misfolded MHC class I molecules is essential to prevent accumulation of defective MHC class I complexes at the surface of CD8(+) T-cells and prevent a stronger T-cell-mediated response. In contrast to other members of the family, does not show GTPase activity. This chain is Immunity-related GTPase family Q protein, found in Homo sapiens (Human).